We begin with the raw amino-acid sequence, 771 residues long: Probable cation-transporting ATPase G (771 aa).

The HMA domain maps to 19 to 86 (GRMRVQATGF…AIIDAETVPA (68 aa)). Residues 72–92 (AAILSAIIDAETVPAAAVPAY) traverse the membrane as a helical segment. Residues 122 to 143 (DVAAQPSGETSDACCDGEDNED) are disordered. Transmembrane regions (helical) follow at residues 163–183 (VLLTASLVAAWAYPLWPVVLG), 209–229 (VGVGTLMTIAALGAVALGELG), 330–350 (VFAGSINGLGVLQVGVTATAA), 387–407 (MIAAALIAGTGSVLGNPLVWI), and 411–431 (LVVLVAAAPCALAIAVPVTVV). Asp-462 (4-aspartylphosphate intermediate) is an active-site residue. 2 residues coordinate Mg(2+): Asp-651 and Asp-655. Transmembrane regions (helical) follow at residues 657–677 (PALAAADLGIAMGAMGTDVAI) and 716–736 (IITVLMPLALFGILGLAAVVL).

The protein belongs to the cation transport ATPase (P-type) (TC 3.A.3) family. Type IB subfamily.

Its subcellular location is the cell membrane. The enzyme catalyses ATP + H2O = ADP + phosphate + H(+). This Mycobacterium bovis (strain ATCC BAA-935 / AF2122/97) protein is Probable cation-transporting ATPase G (ctpG).